Here is a 255-residue protein sequence, read N- to C-terminus: Aliphatic sulfonates import ATP-binding protein SsuB (255 aa).

One can recognise an ABC transporter domain in the interval 7 to 231 (IKEKAFVQEG…PRNRTTPDFQ (225 aa)). ATP is bound at residue 39 to 46 (GPSGCGKS).

It belongs to the ABC transporter superfamily. Aliphatic sulfonates importer (TC 3.A.1.17.2) family. In terms of assembly, the complex is composed of two ATP-binding proteins (SsuB), two transmembrane proteins (SsuC) and a solute-binding protein (SsuA).

The protein resides in the cell membrane. The enzyme catalyses ATP + H2O + aliphatic sulfonate-[sulfonate-binding protein]Side 1 = ADP + phosphate + aliphatic sulfonateSide 2 + [sulfonate-binding protein]Side 1.. Its function is as follows. Part of the ABC transporter complex SsuABC involved in aliphatic sulfonates import. Responsible for energy coupling to the transport system. Is also involved in taurine transport. The polypeptide is Aliphatic sulfonates import ATP-binding protein SsuB (Bacillus subtilis (strain 168)).